The primary structure comprises 372 residues: Alanine dehydrogenase 1 (372 aa).

His94 is a catalytic residue. 170–200 is an NAD(+) binding site; sequence TYVIFGGGVAATNAANVALGLNAKVIIIELN.

This sequence belongs to the AlaDH/PNT family.

It carries out the reaction L-alanine + NAD(+) + H2O = pyruvate + NH4(+) + NADH + H(+). It functions in the pathway amino-acid degradation; L-alanine degradation via dehydrogenase pathway; NH(3) and pyruvate from L-alanine: step 1/1. Functionally, may play a role in cell wall synthesis as L-alanine is an important constituent of the peptidoglycan layer. This chain is Alanine dehydrogenase 1 (ald1), found in Staphylococcus aureus (strain MSSA476).